The primary structure comprises 202 residues: MKTSAQQLLSALLLPLSVLAAPTGSIEARACSDVTVIFARGTTETGTLGTVVGPPFLAALKSALGSSSVTMNGVDYPADVPGFLQGGDPAGSQTMATMVTSTLSSCPDTKLVISGYSQGGQLVHNAAKLLPAETTAKISSAVIFGDPDNGDPVQGVSADRTDIICHAGDNICQGGSLILLAHLTYGMDTTAAAAFVKKAAGL.

The first 20 residues, 1 to 20 (MKTSAQQLLSALLLPLSVLA), serve as a signal peptide directing secretion. An intrachain disulfide couples Cys-31 to Cys-106. The active-site Nucleophile is the Ser-117. Cys-165 and Cys-172 are joined by a disulfide. Asp-169 is an active-site residue. Residue His-182 is the Proton donor/acceptor of the active site.

This sequence belongs to the cutinase family. The 2 disulfide bonds play a critical role in holding the catalytic residues in juxta-position; reduction of the disulfide bridges results in the complete inactivation of the enzyme.

It localises to the secreted. The catalysed reaction is cutin + H2O = cutin monomers.. Functionally, catalyzes the hydrolysis of complex carboxylic polyesters found in the cell wall of plants. Degrades cutin, a macromolecule that forms the structure of the plant cuticle. Allows pathogenic fungi to penetrate through the cuticular barrier into the host plant during the initial stage of fungal infection. The chain is Cutinase from Botryotinia fuckeliana (Noble rot fungus).